A 182-amino-acid polypeptide reads, in one-letter code: Adenine phosphoribosyltransferase (182 aa).

The protein belongs to the purine/pyrimidine phosphoribosyltransferase family. As to quaternary structure, homodimer.

The protein resides in the cytoplasm. The enzyme catalyses AMP + diphosphate = 5-phospho-alpha-D-ribose 1-diphosphate + adenine. The protein operates within purine metabolism; AMP biosynthesis via salvage pathway; AMP from adenine: step 1/1. In terms of biological role, catalyzes a salvage reaction resulting in the formation of AMP, that is energically less costly than de novo synthesis. The chain is Adenine phosphoribosyltransferase from Pseudomonas entomophila (strain L48).